The following is a 603-amino-acid chain: Rab proteins geranylgeranyltransferase component A (603 aa).

Residue S470 is modified to Phosphoserine.

This sequence belongs to the Rab GDI family.

In terms of biological role, substrate-binding subunit (component A) of the Rab geranylgeranyltransferase (GGTase) complex. Binds unprenylated Rab proteins and presents the substrate peptide to the catalytic component B. The component A is thought to be regenerated by transferring its prenylated Rab back to the donor membrane. The chain is Rab proteins geranylgeranyltransferase component A (MRS6) from Saccharomyces cerevisiae (strain ATCC 204508 / S288c) (Baker's yeast).